The primary structure comprises 494 residues: MSSYRIQGATGEWEVVIGLEVHAQVVSNAKLFSGASAAFGAEPNQSVSLVDAAMPGMLPVPNEECIRQAVKTGMALGAEINRWSRFDRKNYFYADLPQGYQISQLYHPLVGEGTITIDADEKAGIAEARTIGVERLHVEQDAGKLMHDQHPTRSYVDLNRSGVALMEIVSKPDMRSPSEAGAYLRKLRSILRYVGSCDGNMEEGSMRADVNVSVRKAGDPFGTRTETKNVNSIRFVMAAIESEANRQVDVIEGGGKIVQETRLYDPDRNETRSMRSKEDAHDYRYFPDPDLLPLELSEEFVAQCRAELPELPDAKRARYEGELGLPAYNAAVLTSDVETARWFEALLDAAGKPGAEVARAASNWLISDLFGALNRLGKAIDESPVSPRQGAELLALVADGTLSGTLAKQVFEIMLETGDDPARIVEERGLKQTSDTGAIEAVIAEVMAANADKVAEYRGGKDKLFGFFVGQTMKAMGGKANPGVVNELLKKTLG.

Belongs to the GatB/GatE family. GatB subfamily. Heterotrimer of A, B and C subunits.

The catalysed reaction is L-glutamyl-tRNA(Gln) + L-glutamine + ATP + H2O = L-glutaminyl-tRNA(Gln) + L-glutamate + ADP + phosphate + H(+). The enzyme catalyses L-aspartyl-tRNA(Asn) + L-glutamine + ATP + H2O = L-asparaginyl-tRNA(Asn) + L-glutamate + ADP + phosphate + 2 H(+). Functionally, allows the formation of correctly charged Asn-tRNA(Asn) or Gln-tRNA(Gln) through the transamidation of misacylated Asp-tRNA(Asn) or Glu-tRNA(Gln) in organisms which lack either or both of asparaginyl-tRNA or glutaminyl-tRNA synthetases. The reaction takes place in the presence of glutamine and ATP through an activated phospho-Asp-tRNA(Asn) or phospho-Glu-tRNA(Gln). The chain is Aspartyl/glutamyl-tRNA(Asn/Gln) amidotransferase subunit B from Rhizorhabdus wittichii (strain DSM 6014 / CCUG 31198 / JCM 15750 / NBRC 105917 / EY 4224 / RW1) (Sphingomonas wittichii).